A 213-amino-acid polypeptide reads, in one-letter code: Andrastin A biosynthesis cluster protein B (213 aa).

Part of the gene cluster that mediates the biosynthesis of andrastins, meroterpenoid compounds that exhibit inhibitory activity against ras farnesyltransferase, suggesting that they could be promising leads for antitumor agents. The first step of the pathway is the synthesis of 3,5-dimethylorsellinic acid (DMOA) by the polyketide synthase adrD via condensation of one acetyl-CoA starter unit with 3 malonyl-CoA units and 2 methylations. DMAO is then converted to farnesyl-DMAO by the prenyltransferase adrG. The methyltransferase adrK catalyzes the methylation of the carboxyl group of farnesyl-DMAO to farnesyl-DMAO methyl ester which is further converted to epoxyfarnesyl-DMAO methyl ester by the FAD-dependent monooxygenase adrH. The terpene cyclase adrI then catalyzes the carbon skeletal rearrangement to generate the andrastin E, the first compound in the pathway having the andrastin scaffold, with the tetracyclic ring system. The post-cyclization tailoring enzymes adrF, adrE, adrJ, and adrA, are involved in the conversion of andrastin E into andrastin A. The short chain dehydrogenase adrF is responsible for the oxidation of the C-3 a hydroxyl group of andrastin E to yield the corresponding ketone, andrastin D. The ketoreductase adrE stereoselectively reduces the carbonyl moiety to reverse the stereochemistry of the C-3 position to yield andrastin F. The acetyltransferase adrJ is the acetyltransferase that attaches the acetyl group to the C-3 hydroxyl group of andrastin F to yield andrastin C. Finally, the cytochrome P450 monooxygenase adrA catalyzes two sequential oxidation reactions of the C-23 methyl group, to generate the corresponding alcohol andrastin B, and aldehyde andrastin A. This Penicillium rubens (strain ATCC 28089 / DSM 1075 / NRRL 1951 / Wisconsin 54-1255) (Penicillium chrysogenum) protein is Andrastin A biosynthesis cluster protein B.